Here is a 232-residue protein sequence, read N- to C-terminus: Phosphatidylserine decarboxylase proenzyme (232 aa).

The active-site Schiff-base intermediate with substrate; via pyruvic acid is the Ser190. Ser190 carries the post-translational modification Pyruvic acid (Ser); by autocatalysis.

Belongs to the phosphatidylserine decarboxylase family. PSD-A subfamily. In terms of assembly, heterodimer of a large membrane-associated beta subunit and a small pyruvoyl-containing alpha subunit. Pyruvate serves as cofactor. Is synthesized initially as an inactive proenzyme. Formation of the active enzyme involves a self-maturation process in which the active site pyruvoyl group is generated from an internal serine residue via an autocatalytic post-translational modification. Two non-identical subunits are generated from the proenzyme in this reaction, and the pyruvate is formed at the N-terminus of the alpha chain, which is derived from the carboxyl end of the proenzyme. The post-translation cleavage follows an unusual pathway, termed non-hydrolytic serinolysis, in which the side chain hydroxyl group of the serine supplies its oxygen atom to form the C-terminus of the beta chain, while the remainder of the serine residue undergoes an oxidative deamination to produce ammonia and the pyruvoyl prosthetic group on the alpha chain.

The protein resides in the cell membrane. It carries out the reaction a 1,2-diacyl-sn-glycero-3-phospho-L-serine + H(+) = a 1,2-diacyl-sn-glycero-3-phosphoethanolamine + CO2. The protein operates within phospholipid metabolism; phosphatidylethanolamine biosynthesis; phosphatidylethanolamine from CDP-diacylglycerol: step 2/2. Its function is as follows. Catalyzes the formation of phosphatidylethanolamine (PtdEtn) from phosphatidylserine (PtdSer). The protein is Phosphatidylserine decarboxylase proenzyme of Agrobacterium fabrum (strain C58 / ATCC 33970) (Agrobacterium tumefaciens (strain C58)).